The following is a 224-amino-acid chain: 2,5-diamino-6-ribosylamino-4(3H)-pyrimidinone 5'-phosphate reductase (224 aa).

NADP(+)-binding positions include threonine 57, aspartate 61, 82–85 (STAN), valine 131, and 153–156 (GASI).

The protein belongs to the HTP reductase family. As to quaternary structure, homodimer.

It carries out the reaction 2,5-diamino-6-(1-D-ribitylamino)pyrimidin-4(3H)-one 5'-phosphate + NADP(+) = 2,5-diamino-6-(1-D-ribosylamino)pyrimidin-4(3H)-one 5'-phosphate + NADPH + H(+). It catalyses the reaction 2,5-diamino-6-(1-D-ribitylamino)pyrimidin-4(3H)-one 5'-phosphate + NAD(+) = 2,5-diamino-6-(1-D-ribosylamino)pyrimidin-4(3H)-one 5'-phosphate + NADH + H(+). It functions in the pathway cofactor biosynthesis; riboflavin biosynthesis. In terms of biological role, catalyzes an early step in riboflavin biosynthesis, the NADPH-dependent reduction of the ribose side chain of 2,5-diamino-6-ribosylamino-4(3H)-pyrimidinone 5'-phosphate, yielding 2,5-diamino-6-ribitylamino-4(3H)-pyrimidinone 5'-phosphate. The sequence is that of 2,5-diamino-6-ribosylamino-4(3H)-pyrimidinone 5'-phosphate reductase (ribD2) from Aquifex aeolicus (strain VF5).